The primary structure comprises 54 residues: uncharacterized protein (54 aa).

The disordered stretch occupies residues 1–54 (MSKKSTPMTKDAASRIQSSAAKSGGDVSSGSFASRAQSAAAINANNTSNSTGKK). Residues 28 to 54 (SSGSFASRAQSAAAINANNTSNSTGKK) show a composition bias toward low complexity.

This is an uncharacterized protein from Dictyostelium discoideum (Social amoeba).